The chain runs to 456 residues: Argininosuccinate lyase (456 aa).

This sequence belongs to the lyase 1 family. Argininosuccinate lyase subfamily.

It is found in the cytoplasm. The catalysed reaction is 2-(N(omega)-L-arginino)succinate = fumarate + L-arginine. Its pathway is amino-acid biosynthesis; L-arginine biosynthesis; L-arginine from L-ornithine and carbamoyl phosphate: step 3/3. In Listeria monocytogenes serotype 4a (strain HCC23), this protein is Argininosuccinate lyase.